The sequence spans 132 residues: Group 2 truncated hemoglobin YjbI (132 aa).

Heme is bound by residues threonine 45, lysine 48, tyrosine 63, and histidine 76.

It belongs to the truncated hemoglobin family. Group II subfamily. In terms of assembly, monomer. The cofactor is heme.

Hemoglobin-like protein that exhibits a low peroxidase activity. Its very high oxygen affinity may rule out the possibility that it is involved in oxygen transport. This Bacillus subtilis (strain 168) protein is Group 2 truncated hemoglobin YjbI (yjbI).